Consider the following 312-residue polypeptide: Coproporphyrin III ferrochelatase (312 aa).

Fe-coproporphyrin III-binding positions include Tyr-13, Arg-30, 46 to 47 (RY), Ser-54, and Tyr-125. Residues His-183 and Glu-264 each coordinate Fe(2+).

The protein belongs to the ferrochelatase family.

It is found in the cytoplasm. It carries out the reaction Fe-coproporphyrin III + 2 H(+) = coproporphyrin III + Fe(2+). The protein operates within porphyrin-containing compound metabolism; protoheme biosynthesis. Involved in coproporphyrin-dependent heme b biosynthesis. Catalyzes the insertion of ferrous iron into coproporphyrin III to form Fe-coproporphyrin III. This Bacillus pumilus (strain SAFR-032) protein is Coproporphyrin III ferrochelatase.